The primary structure comprises 298 residues: UDP-N-acetylenolpyruvoylglucosamine reductase (298 aa).

Residues 26 to 191 (KTGGAADVFV…LDATFSLALE (166 aa)) form the FAD-binding PCMH-type domain. The active site involves R170. S220 serves as the catalytic Proton donor. The active site involves E290.

It belongs to the MurB family. The cofactor is FAD.

Its subcellular location is the cytoplasm. The catalysed reaction is UDP-N-acetyl-alpha-D-muramate + NADP(+) = UDP-N-acetyl-3-O-(1-carboxyvinyl)-alpha-D-glucosamine + NADPH + H(+). Its pathway is cell wall biogenesis; peptidoglycan biosynthesis. Functionally, cell wall formation. The sequence is that of UDP-N-acetylenolpyruvoylglucosamine reductase from Listeria monocytogenes serotype 4b (strain CLIP80459).